Reading from the N-terminus, the 324-residue chain is Lignin-forming anionic peroxidase (324 aa).

Positions 1 to 22 (MSFLRFVGAILFLVAIFGASNA) are cleaved as a signal peptide. Gln23 carries the pyrrolidone carboxylic acid modification. Cystine bridges form between Cys33/Cys111, Cys66/Cys71, Cys117/Cys320, and Cys196/Cys228. N-linked (GlcNAc...) asparagine glycosylation occurs at Asn35. Catalysis depends on His64, which acts as the Proton acceptor. Ca(2+) is bound by residues Asp65, Val68, Gly70, Asp72, and Ser74. Asn150 is a glycosylation site (N-linked (GlcNAc...) asparagine). Pro159 serves as a coordination point for substrate. Heme b is bound at residue His189. Thr190 provides a ligand contact to Ca(2+). An N-linked (GlcNAc...) asparagine glycan is attached at Asn207. Ca(2+) is bound by residues Asp242, Thr245, and Asp250.

This sequence belongs to the peroxidase family. Classical plant (class III) peroxidase subfamily. Requires Ca(2+) as cofactor. Heme b serves as cofactor.

The protein localises to the secreted. It carries out the reaction 2 a phenolic donor + H2O2 = 2 a phenolic radical donor + 2 H2O. In terms of biological role, removal of H(2)O(2), oxidation of toxic reductants, biosynthesis and degradation of lignin, suberization, auxin catabolism, response to environmental stresses such as wounding, pathogen attack and oxidative stress. These functions might be dependent on each isozyme/isoform in each plant tissue. Functionally, plays an integral role in secondary cell wall biosynthesis by the polymerization of cinnamyl alcohols into lignin and by forming rigid cross-links between cellulose, pectin, hydroxy-proline-rich glycoproteins, and lignin. The sequence is that of Lignin-forming anionic peroxidase from Nicotiana tabacum (Common tobacco).